Here is a 252-residue protein sequence, read N- to C-terminus: Serine/threonine phosphatase stp (252 aa).

A compositionally biased stretch (basic and acidic residues) spans 1–18 (MHAEFRTDRGRIRHHNED). The tract at residues 1 to 23 (MHAEFRTDRGRIRHHNEDNGGVF) is disordered. Residues 2-242 (HAEFRTDRGR…DNITVLLVER (241 aa)) enclose the PPM-type phosphatase domain. Mn(2+) contacts are provided by D36, G37, D194, and D233.

This sequence belongs to the PP2C family. The cofactor is Mn(2+).

It localises to the cytoplasm. Its subcellular location is the membrane. It carries out the reaction O-phospho-L-seryl-[protein] + H2O = L-seryl-[protein] + phosphate. The catalysed reaction is O-phospho-L-threonyl-[protein] + H2O = L-threonyl-[protein] + phosphate. Protein phosphatase that dephosphorylates EF-Tu. The protein is Serine/threonine phosphatase stp (stp) of Listeria monocytogenes serotype 4b (strain F2365).